The sequence spans 54 residues: ATP synthase F(0) complex subunit 8 (54 aa).

Residues Trp9 to Leu25 form a helical membrane-spanning segment.

The protein belongs to the ATPase protein 8 family. Component of the ATP synthase complex composed at least of ATP5F1A/subunit alpha, ATP5F1B/subunit beta, ATP5MC1/subunit c (homooctomer), MT-ATP6/subunit a, MT-ATP8/subunit 8, ATP5ME/subunit e, ATP5MF/subunit f, ATP5MG/subunit g, ATP5MK/subunit k, ATP5MJ/subunit j, ATP5F1C/subunit gamma, ATP5F1D/subunit delta, ATP5F1E/subunit epsilon, ATP5PF/subunit F6, ATP5PB/subunit b, ATP5PD/subunit d, ATP5PO/subunit OSCP. ATP synthase complex consists of a soluble F(1) head domain (subunits alpha(3) and beta(3)) - the catalytic core - and a membrane F(0) domain - the membrane proton channel (subunits c, a, 8, e, f, g, k and j). These two domains are linked by a central stalk (subunits gamma, delta, and epsilon) rotating inside the F1 region and a stationary peripheral stalk (subunits F6, b, d, and OSCP).

Its subcellular location is the mitochondrion membrane. Subunit 8, of the mitochondrial membrane ATP synthase complex (F(1)F(0) ATP synthase or Complex V) that produces ATP from ADP in the presence of a proton gradient across the membrane which is generated by electron transport complexes of the respiratory chain. ATP synthase complex consist of a soluble F(1) head domain - the catalytic core - and a membrane F(1) domain - the membrane proton channel. These two domains are linked by a central stalk rotating inside the F(1) region and a stationary peripheral stalk. During catalysis, ATP synthesis in the catalytic domain of F(1) is coupled via a rotary mechanism of the central stalk subunits to proton translocation. In vivo, can only synthesize ATP although its ATP hydrolase activity can be activated artificially in vitro. Part of the complex F(0) domain. The sequence is that of ATP synthase F(0) complex subunit 8 from Branchiostoma lanceolatum (Common lancelet).